Consider the following 464-residue polypeptide: tRNA(Ile)-lysidine synthase (464 aa).

26-31 is a binding site for ATP; the sequence is SGGPDS.

It belongs to the tRNA(Ile)-lysidine synthase family.

Its subcellular location is the cytoplasm. It carries out the reaction cytidine(34) in tRNA(Ile2) + L-lysine + ATP = lysidine(34) in tRNA(Ile2) + AMP + diphosphate + H(+). In terms of biological role, ligates lysine onto the cytidine present at position 34 of the AUA codon-specific tRNA(Ile) that contains the anticodon CAU, in an ATP-dependent manner. Cytidine is converted to lysidine, thus changing the amino acid specificity of the tRNA from methionine to isoleucine. This Geobacillus kaustophilus (strain HTA426) protein is tRNA(Ile)-lysidine synthase.